A 254-amino-acid chain; its full sequence is Proline-rich protein 23A3 (254 aa).

Disordered regions lie at residues 1-50 (MLRT…LEAP), 161-196 (ASPP…GAEQ), and 212-254 (PFPG…LVYE). Over residues 35-50 (EPACPEPLAQPELEAP) the composition is skewed to low complexity. Pro residues predominate over residues 214–241 (PGSPLQPLPPSPSRNPQEQLPPCPPCSP). The segment covering 243 to 254 (APRRARKRLVYE) has biased composition (basic residues).

It belongs to the PRR23 family.

The sequence is that of Proline-rich protein 23A3 from Mus musculus (Mouse).